The sequence spans 306 residues: MNDLLKGSLEFSRDRSNRSDIESGHGPGNSGDLGLSGFFKKVQEIEKQYEKLDKHLNKLQGAHEETKAVTKAPAMKSIKQRMERDVDEVGRISRFIKGKIEELDRENLENRTKPGCGKGTGVDRTRTATTIAVKKKFKDKISEFQTLRQNIQQEYREVVERRVFTVTGQRADEEAIDRLIETGDSEQIFQKAIREQGRGQIMDTLAEIQERHDAVRDLEKKLLDLQQVFLDMAVLVDAQGEMLDNIENMVSSAVDHVQSGNNQLTKAVKSQKSSRKWMCIAILILLIIIIITVISVLKPWTQKNGA.

Position 1 is an N-acetylmethionine (M1). The Cytoplasmic segment spans residues 1–276; it reads MNDLLKGSLE…AVKSQKSSRK (276 aa). The segment covering 11 to 23 has biased composition (basic and acidic residues); the sequence is FSRDRSNRSDIES. Positions 11–35 are disordered; sequence FSRDRSNRSDIESGHGPGNSGDLGL. Coiled-coil stretches lie at residues 35-72 and 134-162; these read LSGFFKKVQEIEKQYEKLDKHLNKLQGAHEETKAVTKA and KKKFKDKISEFQTLRQNIQQEYREVVERR. Residues 205 to 267 form the t-SNARE coiled-coil homology domain; it reads LAEIQERHDA…QSGNNQLTKA (63 aa). Residues 277 to 297 traverse the membrane as a helical; Anchor for type IV membrane protein segment; that stretch reads WMCIAILILLIIIIITVISVL. The Vesicular portion of the chain corresponds to 298 to 306; the sequence is KPWTQKNGA.

Belongs to the syntaxin family. Part of the t-SNARE complex.

Its subcellular location is the membrane. In terms of biological role, vesicle trafficking protein that functions in the secretory pathway. This is Putative syntaxin-131 (SYP131) from Arabidopsis thaliana (Mouse-ear cress).